The following is a 407-amino-acid chain: Arrestin red cell isoform 1 (407 aa).

The protein belongs to the arrestin family.

It is found in the cytoplasm. The sequence is that of Arrestin red cell isoform 1 from Oncorhynchus mykiss (Rainbow trout).